The primary structure comprises 777 residues: Proton-coupled zinc antiporter SLC30A5 (777 aa).

Topologically, residues 1-28 are cytoplasmic; the sequence is MEEKYSSNVMSSGRLGPVDAPESRLTRY. Residues 29–49 traverse the membrane as a helical segment; sequence IVLLCFTKFLKALGIFESYDL. Over 50 to 52 the chain is Lumenal; sequence LKV. The chain crosses the membrane as a helical span at residues 53-73; sequence VHIVQFIFILKLGSTCFMVLF. Over 74 to 94 the chain is Cytoplasmic; that stretch reads QKPFSSGKSITKRQWVSIVKH. A helical transmembrane segment spans residues 95–115; it reads AFVSCIISLLWFFGLTLCGPL. At 116 to 117 the chain is on the lumenal side; sequence RT. The helical transmembrane segment at 118–138 threads the bilayer; it reads LLLFEHSDIVVISLLTVLFTG. Topologically, residues 139-148 are cytoplasmic; the sequence is SGGGPSKTRG. The chain crosses the membrane as a helical span at residues 149–169; that stretch reads AAFFIIAVICLLLFDNDDLMA. At 170–189 the chain is on the lumenal side; that stretch reads KIAEHPEGHHDSALTHFLYR. Residues 190 to 210 form a helical membrane-spanning segment; the sequence is AFFLLGVADHKGGVLLLVLAL. At 211 to 234 the chain is on the cytoplasmic side; that stretch reads CFNVGFHTASRKLSLDIGGAKRLQ. A helical transmembrane segment spans residues 235 to 255; that stretch reads ALSHLVSVIILSPWVIILSAT. Topologically, residues 256 to 263 are lumenal; it reads TESKIESW. A helical membrane pass occupies residues 264–284; it reads SALIMPFMTVIFSVMIMDFYV. Topologically, residues 285–299 are cytoplasmic; the sequence is ESVCSVKMEPSKCAR. The chain crosses the membrane as a helical span at residues 300–320; the sequence is YGSFLIFASALLLGNFWTHPI. Topologically, residues 321–338 are lumenal; it reads TDQLRAMNKPAHQLHTEH. Residues 339–359 form a helical membrane-spanning segment; the sequence is VLSGGVVVSAIFFILSAQILA. The Cytoplasmic segment spans residues 360-414; that stretch reads SSSRKGQRGTLVGYSPEGTPLYNFMGDALHNTSPSMPRFLKDSLKQILEEYDSRQ. A helical membrane pass occupies residues 415 to 435; that stretch reads IFYFLCLNLAFTFVEIFYGVW. Residues 436–444 lie on the Lumenal side of the membrane; that stretch reads TNSLGLLSD. A helical transmembrane segment spans residues 445–465; sequence GFHMLFDCSALVMGLIAALMT. Positions 447 and 451 each coordinate Zn(2+). Residues 466–484 lie on the Cytoplasmic side of the membrane; the sequence is RWKATRIFSYGYGRVEILS. Residues 485-505 form a helical membrane-spanning segment; it reads GFINGLFLVVIAFFVFIEAVA. Over 506 to 516 the chain is Lumenal; that stretch reads RIYDPPDINTD. A helical transmembrane segment spans residues 517-537; that stretch reads MLTPVSVGGLIVNLVGICAFS. The tract at residues 538-586 is his-rich loop; required for zinc transport; the sequence is HAHSHGAARGGCPSHDHGHSHHGHGHSHGHNHGHSHSDHGHNHGHTHNH. Residues 538 to 604 lie on the Cytoplasmic side of the membrane; that stretch reads HAHSHGAARG…VGMNANMRGV (67 aa). The segment at 547–593 is disordered; it reads GGCPSHDHGHSHHGHGHSHGHNHGHSHSDHGHNHGHTHNHGHSHGSA. 2 stretches are compositionally biased toward basic residues: residues 555–571 and 579–589; these read GHSHHGHGHSHGHNHGH and NHGHTHNHGHS. A helical transmembrane segment spans residues 605–625; it reads FSHVLADTLGSVGVIVSTILI. 2 residues coordinate Zn(2+): His-607 and Asp-611. Residues 626 to 629 lie on the Lumenal side of the membrane; the sequence is RQFG. The helical transmembrane segment at 630-650 threads the bilayer; that stretch reads WLIADPLCSLFIAVLIFGSVL. The Cytoplasmic portion of the chain corresponds to 651–777; the sequence is PLLKDACQVI…KYYKDGTYIM (127 aa).

This sequence belongs to the cation diffusion facilitator (CDF) transporter (TC 2.A.4) family. SLC30A subfamily. Heterodimer with SLC30A6/ZNT6; form a functional zinc ion transmembrane transporter.

Its subcellular location is the golgi apparatus. The protein resides in the golgi stack membrane. It is found in the cytoplasmic vesicle. The protein localises to the COPII-coated vesicle membrane. It localises to the secretory vesicle membrane. Its subcellular location is the trans-Golgi network membrane. It carries out the reaction Zn(2+)(in) + 2 H(+)(out) = Zn(2+)(out) + 2 H(+)(in). In terms of biological role, together with SLC30A6 forms a functional proton-coupled zinc ion antiporter mediating zinc entry into the lumen of organelles along the secretory pathway. By contributing to zinc ion homeostasis within the early secretory pathway, regulates the activation and folding of enzymes like alkaline phosphatases and enzymes involved in phosphatidylinositol glycan anchor biosynthesis. The sequence is that of Proton-coupled zinc antiporter SLC30A5 (slc30a5) from Xenopus tropicalis (Western clawed frog).